A 346-amino-acid chain; its full sequence is S-adenosylmethionine:tRNA ribosyltransferase-isomerase (346 aa).

The protein belongs to the QueA family. Monomer.

The protein localises to the cytoplasm. The catalysed reaction is 7-aminomethyl-7-carbaguanosine(34) in tRNA + S-adenosyl-L-methionine = epoxyqueuosine(34) in tRNA + adenine + L-methionine + 2 H(+). The protein operates within tRNA modification; tRNA-queuosine biosynthesis. Transfers and isomerizes the ribose moiety from AdoMet to the 7-aminomethyl group of 7-deazaguanine (preQ1-tRNA) to give epoxyqueuosine (oQ-tRNA). The protein is S-adenosylmethionine:tRNA ribosyltransferase-isomerase of Lysinibacillus sphaericus (strain C3-41).